Here is a 916-residue protein sequence, read N- to C-terminus: Alanine--tRNA ligase (916 aa).

Residues H611, H615, C714, and H718 each coordinate Zn(2+).

Belongs to the class-II aminoacyl-tRNA synthetase family. It depends on Zn(2+) as a cofactor.

The protein localises to the cytoplasm. It carries out the reaction tRNA(Ala) + L-alanine + ATP = L-alanyl-tRNA(Ala) + AMP + diphosphate. Functionally, catalyzes the attachment of alanine to tRNA(Ala) in a two-step reaction: alanine is first activated by ATP to form Ala-AMP and then transferred to the acceptor end of tRNA(Ala). Also edits incorrectly charged Ser-tRNA(Ala) and Gly-tRNA(Ala) via its editing domain. The sequence is that of Alanine--tRNA ligase from Methanospirillum hungatei JF-1 (strain ATCC 27890 / DSM 864 / NBRC 100397 / JF-1).